The sequence spans 241 residues: RecQ-mediated genome instability protein 1 (241 aa).

This sequence belongs to the RMI1 family. Forms a complex with SGS1 and TOP3.

The protein resides in the cytoplasm. Its subcellular location is the nucleus. In terms of biological role, structure-specific DNA-binding protein with a preference for cruciform structures. Also binds single-stranded DNA (ssDNA). Functions together with SGS1 and TOP3 to maintain genome integrity. Essential for proper meiotic cell division. Required for normal S-phase progression and DNA damage response. Required for resistance to the DNA-damaging agent methyl methanesulfonate (MMS). This is RecQ-mediated genome instability protein 1 from Saccharomyces cerevisiae (strain ATCC 204508 / S288c) (Baker's yeast).